Consider the following 383-residue polypeptide: Glutaminyl-peptide cyclotransferase-like protein (383 aa).

A helical membrane pass occupies residues Val33 to Trp53. An intrachain disulfide couples Cys168 to Cys192. Asp187 is a Zn(2+) binding site. Residue Glu226 is the Proton acceptor of the active site. Glu227 provides a ligand contact to Zn(2+). Asp270 serves as the catalytic Proton acceptor. His352 contacts Zn(2+).

Belongs to the glutaminyl-peptide cyclotransferase family. Detected in thalamus, hippocampus, brain cortex, cerebellum, kidney, lung and liver, and at low levels in heart and spleen.

It localises to the golgi apparatus membrane. The enzyme catalyses N-terminal L-glutaminyl-[peptide] = N-terminal 5-oxo-L-prolyl-[peptide] + NH4(+). Functionally, responsible for the biosynthesis of pyroglutamyl peptides. The sequence is that of Glutaminyl-peptide cyclotransferase-like protein (Qpctl) from Mus musculus (Mouse).